The primary structure comprises 382 residues: MSLNIFWFLPTHGDGKYLGTTEGARAVDHGYLSQIAQAADRLGFGGVLIPTGRSCEDSWLVAASLIPVTERLKFLVALRPGIISPTVAARQAATLDRLSNGRALFNLVTGGDPDELAGDGLHLNHQERYEASVEFTRIWRKVLEGEVVDYDGKHLQVKGAKLLYPPIQQPRPPLYFGGSSDAAQDLAAEQVELYLTWGEPPAAVAEKIAQVREKAAAQGREVRFGIRLHVIVRETNEEAWAAADKLISHLDDDTIARAQASLARFDSVGQQRMAALHGGKRDKLEVAPNLWAGVGLVRGGAGTALVGDGPTVAARVKEYADLGIDTFIFSGYPHLEESYRVAELLFPHLDVQRPEQPKSGGYVSPFGEMVANDILPKSVSQS.

The protein belongs to the SsuD family.

It catalyses the reaction an alkanesulfonate + FMNH2 + O2 = an aldehyde + FMN + sulfite + H2O + 2 H(+). Its function is as follows. Catalyzes the desulfonation of aliphatic sulfonates. This chain is Alkanesulfonate monooxygenase, found in Pseudomonas entomophila (strain L48).